We begin with the raw amino-acid sequence, 127 residues long: Large ribosomal subunit protein bL12 (127 aa).

This sequence belongs to the bacterial ribosomal protein bL12 family. Homodimer. Part of the ribosomal stalk of the 50S ribosomal subunit. Forms a multimeric L10(L12)X complex, where L10 forms an elongated spine to which 2 to 4 L12 dimers bind in a sequential fashion. Binds GTP-bound translation factors.

In terms of biological role, forms part of the ribosomal stalk which helps the ribosome interact with GTP-bound translation factors. Is thus essential for accurate translation. This Streptomyces coelicolor (strain ATCC BAA-471 / A3(2) / M145) protein is Large ribosomal subunit protein bL12.